A 208-amino-acid chain; its full sequence is Casparian strip membrane protein 2 (208 aa).

Residues 1-23 form a disordered region; the sequence is MDSKSGRSESAINIPESNSTKHK. Residues 1 to 46 are Cytoplasmic-facing; it reads MDSKSGRSESAINIPESNSTKHKSTVVHTATKVAAVAPRGGGWRRG. Positions 8–18 are enriched in polar residues; the sequence is SESAINIPESN. The chain crosses the membrane as a helical span at residues 47-67; that stretch reads VSIFDFILRICALAAALAATA. Over 68–96 the chain is Extracellular; sequence TMGTTDQTLPFFTQFFQFQASYDDLPAFT. A helical transmembrane segment spans residues 97-117; that stretch reads FFVVANGIASGYLVLSLPFSI. At 118 to 129 the chain is on the cytoplasmic side; the sequence is ATIVRPHAAAIK. The chain crosses the membrane as a helical span at residues 130–150; it reads LLLIIFDTVMVAFTAAAAAAA. The Extracellular segment spans residues 151–184; that stretch reads AAIVYLAHNGNSKTNWFAICQQFNDFCQRVSGAV. Residues 185-205 traverse the membrane as a helical segment; the sequence is VASFVAAVILIFLVVLSAVAI. Residues 206–208 lie on the Cytoplasmic side of the membrane; sequence RKH.

It belongs to the Casparian strip membrane proteins (CASP) family. As to quaternary structure, homodimer and heterodimers.

It is found in the cell membrane. Its function is as follows. Regulates membrane-cell wall junctions and localized cell wall deposition. Required for establishment of the Casparian strip membrane domain (CSD) and the subsequent formation of Casparian strips, a cell wall modification of the root endodermis that determines an apoplastic barrier between the intraorganismal apoplasm and the extraorganismal apoplasm and prevents lateral diffusion. This Triphysaria pusilla (Dwarf owl's-clover) protein is Casparian strip membrane protein 2.